A 115-amino-acid chain; its full sequence is Large ribosomal subunit protein bL20c (115 aa).

It belongs to the bacterial ribosomal protein bL20 family.

The protein localises to the plastid. The protein resides in the chloroplast. Binds directly to 23S ribosomal RNA and is necessary for the in vitro assembly process of the 50S ribosomal subunit. It is not involved in the protein synthesizing functions of that subunit. The sequence is that of Large ribosomal subunit protein bL20c from Emiliania huxleyi (Coccolithophore).